The sequence spans 255 residues: CCAAT/enhancer-binding protein delta (255 aa).

3 disordered regions span residues 1–42 (MTCA…AAPA), 91–121 (GGPA…PGSL), and 138–206 (PAAQ…QEMQ). Lys107 is covalently cross-linked (Glycyl lysine isopeptide (Lys-Gly) (interchain with G-Cter in SUMO)). Over residues 141-161 (QPTPPASPDPPRRSPAPPAPG) the composition is skewed to pro residues. Positions 163 to 187 (ARDKAAGKRGPDRGSPEYRQRRERN) are enriched in basic and acidic residues. In terms of domain architecture, bZIP spans 177–240 (SPEYRQRRER…AGLRRFFKQL (64 aa)). The basic motif stretch occupies residues 181 to 208 (RQRRERNNIAVRKSRDKAKRRNQEMQQK). The segment at 212–240 (LSAENEKLQQRVEQLTRDLAGLRRFFKQL) is leucine-zipper.

The protein belongs to the bZIP family. C/EBP subfamily. In terms of assembly, binds DNA as a homodimer and as a heterodimer. Can form stable heterodimers with CEBPA, CEBPB and CEBPE. Directly interacts with SPI1/PU.1; this interaction does not affect DNA-binding properties of each partner. Interacts with PRDM16.

Its subcellular location is the nucleus. Functionally, transcription activator that recognizes two different DNA motifs: the CCAAT homology common to many promoters and the enhanced core homology common to many enhancers. Important transcription factor regulating the expression of genes involved in immune and inflammatory responses. Transcriptional activator that enhances IL6 transcription alone and as heterodimer with CEBPB. This chain is CCAAT/enhancer-binding protein delta (CEBPD), found in Ovis aries (Sheep).